The following is a 194-amino-acid chain: Interleukin-17C (194 aa).

The first 16 residues, 1–16 (MSLLLLGWLPTGMTHQ), serve as a signal peptide directing secretion. Cystine bridges form between Cys-125-Cys-185 and Cys-130-Cys-187.

Belongs to the IL-17 family. Binds to a heterodimer formed by IL17RA and IL17RE. In terms of tissue distribution, expressed by epithelial cells after bacterial challenge. Low expression, if any, in lymphocytes.

Its subcellular location is the secreted. Its function is as follows. Cytokine that plays a crucial role in innate immunity of the epithelium, including to intestinal bacterial pathogens, in an autocrine manner. Stimulates the production of antibacterial peptides and pro-inflammatory molecules for host defense by signaling through the NFKB and MAPK pathways. Acts synergically with IL22, TNF and IL1B in inducing antibacterial peptides. May have protective function by maintaining epithelial homeostasis after an inflammatory challenge, such as that caused in the intestine by dextran sulfate sodium in a colitis model. May also promote an inflammatory phenotype, such as skin in a psoriasis model. Enhanced IL17C/IL17RE signaling may also lead to greater susceptibility to autoimmune diseases, such as autoimmune encephalitis. The protein is Interleukin-17C (Il17c) of Mus musculus (Mouse).